The following is a 226-amino-acid chain: Transcription factor bHLH115 (226 aa).

One can recognise a bHLH domain in the interval 66 to 117 (TGSNSKACREKQRRDRLNDKFTELSSVLEPGRTPKTDKVAIINDAIRMVNQA).

In terms of assembly, homodimer. Interacts with BTS and BHLH47/PYE.

It localises to the nucleus. This chain is Transcription factor bHLH115 (BHLH115), found in Arabidopsis thaliana (Mouse-ear cress).